The following is a 256-amino-acid chain: (R)-S-adenosyl-L-methionine hydrolase (256 aa).

Residues Asp7, His41, Asp68, and Asn183 each contribute to the adenosine site. (R)-S-adenosyl-L-methionine is bound by residues Asn183, Tyr212, Ser226, Glu231, Val234, and Met236. An adenosine-binding site is contributed by Val234.

This sequence belongs to the SAM hydrolase / SAM-dependent halogenase family. In terms of assembly, homotrimer.

The enzyme catalyses (R)-S-adenosyl-L-methionine + H2O = adenosine + L-methionine + H(+). In terms of biological role, catalyzes the hydrolysis of S-adenosyl-L-methionine (SAM) into adenosine and L-methionine. Is likely stereoselective, specifically hydrolyzing (R)-S-adenosyl-L-methionine ((R)-SAM), the inactive form of the ubiquitous cofactor SAM, and not the active form of SAM, (S)-S-adenosyl-L-methionine. Probaly plays a role in preventing accumulation of (R)-S-adenosyl-L-methionine in cells; maintenance of (S)-S-denosyl-L-methionine homochirality is important for cellular health given that the (R)-form is largely inactive as a methyl donor and can function as an inhibitor of methyltransferases. Is unable to mediate a fluorination or chlorination reaction with SAM. This chain is (R)-S-adenosyl-L-methionine hydrolase, found in Pyrococcus horikoshii (strain ATCC 700860 / DSM 12428 / JCM 9974 / NBRC 100139 / OT-3).